Reading from the N-terminus, the 2090-residue chain is Nuclear pore complex protein Nup214 (2090 aa).

N-acetylglycine is present on Gly2. Ser30 is subject to Phosphoserine. 7 Blade repeats span residues Leu41–Phe93, Pro94–Gly150, Met151–Val193, Ala194–His239, Pro240–His303, His304–Asp359, and Ser360–Ile404. The segment at Leu41–Ile404 is seven-bladed beta propeller. Residues Glu236–Ser1418 form a 44 X 2 AA repeats of F-G region. Thr416 is subject to Phosphothreonine. Phosphoserine occurs at positions 421, 430, and 433. The disordered stretch occupies residues Leu422–Pro460. Residues Lys429–Ser441 are compositionally biased toward low complexity. Thr434, Thr437, and Thr439 each carry phosphothreonine. The tract at residues Ser450–Asn586 is (Microbial infection) Binds human adenovirus 5 (HAdV-5) protein L3 (hexon). The segment at Val481–Gly2076 is 11 X 5 AA approximate repeats. Residues Phe484–Gly485 form repeat 1. 2 stretches are compositionally biased toward low complexity: residues Leu489–Pro513 and Pro524–Ala536. The interval Leu489–Ala536 is disordered. Copy 2 of the repeat occupies Phe548 to Gly549. Low complexity-rich tracts occupy residues Ser597 to Pro629 and Val637 to Pro658. Residues Ser597 to Asp700 are disordered. A phosphoserine mark is found at Ser651, Ser657, and Ser666. Thr670 is subject to Phosphothreonine. The residue at position 678 (Ser678) is a Phosphoserine. A coiled-coil region spans residues Gln680–Gln1209. The span at Lys691 to Asp700 shows a compositional bias: basic and acidic residues. 2 leucine-zipper regions span residues Leu740–Leu768 and Leu861–Leu882. Ser760 carries the post-translational modification Phosphoserine. Ser940, Ser970, Ser974, and Ser989 each carry phosphoserine. A disordered region spans residues Thr987–Val1009. The span at Glu997 to Glu1007 shows a compositional bias: basic and acidic residues. Thr1021 carries the phosphothreonine modification. Phosphoserine is present on residues Ser1023, Ser1045, Ser1056, and Ser1081. Over residues Leu1128–Lys1149 the composition is skewed to polar residues. Residues Leu1128–His1152 are disordered. A phosphothreonine mark is found at Thr1134, Thr1150, and Thr1156. Composition is skewed to polar residues over residues Leu1168–Asp1188 and Ala1199–Pro1213. Residues Leu1168–Pro1213 are disordered. Residue Ser1181 is modified to Phosphoserine. The stretch at Phe1225–Gly1226 is repeat 3. Composition is skewed to polar residues over residues Ser1234–Ala1254 and Pro1273–Pro1285. Disordered regions lie at residues Ser1234–Lys1316 and Leu1337–Thr1408. A compositionally biased stretch (low complexity) spans Pro1288–Ser1299. A compositionally biased stretch (polar residues) spans Thr1301–Leu1310. A Phosphothreonine modification is found at Thr1312. Residues Lys1347–Val1368 are compositionally biased toward polar residues. At Ser1353 the chain carries Phosphoserine. Over residues Pro1386 to Thr1408 the composition is skewed to low complexity. An 18 X 4 AA approximate repeats region spans residues Ala1409–Gly2084. 4 tandem repeats follow at residues Phe1411 to Gly1412, Phe1427 to Gly1428, Phe1441 to Gly1442, and Phe1473 to Gly1474. Residues Phe1427–Phe2085 are 11 X 3 AA approximate repeats. The segment covering Ser1438 to Val1450 has biased composition (polar residues). A disordered region spans residues Ser1438–Ser1467. Low complexity-rich tracts occupy residues Ser1479–Ala1489 and Ser1508–Pro1527. The disordered stretch occupies residues Ser1479 to Lys1539. Lys1538 is covalently cross-linked (Glycyl lysine isopeptide (Lys-Gly) (interchain with G-Cter in SUMO2)). 18 repeat units span residues Phe1635–Gly1636, Phe1674–Gly1675, Phe1686–Gly1687, Phe1713–Gly1714, Phe1721–Gly1722, Phe1726–Gly1727, Phe1732–Gly1733, Phe1756–Gly1757, Phe1772–Gly1773, Phe1786–Gly1787, Phe1798–Gly1799, Phe1806–Gly1807, Phe1812–Gly1813, Phe1819–Gly1820, Phe1842–Gly1843, Phe1851–Gly1852, Phe1862–Gly1863, and Phe1874–Gly1875. The interval Gly1884 to Phe1903 is disordered. A run of 5 repeats spans residues Phe1910–Gly1911, Phe1922–Gly1923, Phe1930–Gly1931, Phe1938–Gly1939, and Phe1959–Gly1960. Ser1963 carries the phosphoserine modification. 3 repeat units span residues Phe1970–Gly1971, Phe1976–Gly1977, and Phe1982–Gly1983. Residue Ser1985 is modified to Phosphoserine. 11 tandem repeats follow at residues Phe1988–Gly1989, Phe1994–Gly1995, Phe2012–Gly2013, Phe2024–Gly2025, Phe2026–Gly2027, Phe2035–Gly2036, Phe2046–Gly2047, Phe2056–Gly2057, Phe2066–Gly2067, Phe2075–Gly2076, and Phe2085–Gly2086.

As to quaternary structure, homodimer. Part of the nuclear pore complex (NPC). Interacts with NUP88. Interacts with ZFP36; this interaction increases upon lipopolysaccharide (LPS) stimulation. Interacts with DDX19. Interacts with XPO1. Interacts with XPO5. In terms of assembly, (Microbial infection) Interacts with human herpes virus 1 (HHV-1) protein UL25; this interaction might be essential to the capsid docking onto the host nuclear pore. (Microbial infection) Interacts (via N-terminus) with human adenovirus 5 (HAdV-5) protein L3 (hexon); this interaction might be essential for the release of the virus genome to the nucleus. Probably glycosylated as it reacts with wheat germ agglutinin (WGA). As to expression, expressed in thymus, spleen, bone marrow, kidney, brain and testis, but hardly in all other tissues or in whole embryos during development.

Its subcellular location is the nucleus. It is found in the nuclear pore complex. In terms of biological role, part of the nuclear pore complex. Has a critical role in nucleocytoplasmic transport. May serve as a docking site in the receptor-mediated import of substrates across the nuclear pore complex. Functionally, (Microbial infection) Required for capsid disassembly of the human adenovirus 5 (HadV-5) leading to release of the viral genome to the nucleus (in vitro). This chain is Nuclear pore complex protein Nup214 (NUP214), found in Homo sapiens (Human).